The chain runs to 971 residues: 116 kDa U5 small nuclear ribonucleoprotein component (971 aa).

M1 carries the post-translational modification N-acetylmethionine. The interval 1-52 is disordered; sequence MDTDLYDEFGNYIGPELDSDEDDDELGRETKDLDEDEDEDEDDVGEHEDDHP. The span at 17-47 shows a compositional bias: acidic residues; the sequence is LDSDEDDDELGRETKDLDEDEDEDEDDVGEH. A Phosphoserine modification is found at S19. Residue K63 forms a Glycyl lysine isopeptide (Lys-Gly) (interchain with G-Cter in SUMO1); alternate linkage. A Glycyl lysine isopeptide (Lys-Gly) (interchain with G-Cter in SUMO2); alternate cross-link involves residue K63. A Phosphothreonine modification is found at T85. The tr-type G domain maps to 126 to 408; sequence ELIRNVTLCG…GIHLTKEELK (283 aa). GTP is bound by residues 135–142, 203–207, and 257–260; these read GHLHHGKT, DTPGH, and NKID.

The protein belongs to the TRAFAC class translation factor GTPase superfamily. Classic translation factor GTPase family. EF-G/EF-2 subfamily. In terms of assembly, component of the U5 snRNP and the U4/U6-U5 tri-snRNP complex, a building block of the spliceosome. The U4/U6-U5 tri-snRNP complex is composed of the U4, U6 and U5 snRNAs and at least PRPF3, PRPF4, PRPF6, PRPF8, PRPF31, SNRNP200, TXNL4A, SNRNP40, DDX23, CD2BP2, PPIH, SNU13, EFTUD2, SART1 and USP39. Component of the pre-catalytic, catalytic and post-catalytic spliceosome complexes. Component of the minor spliceosome, which splices U12-type introns. Within this complex, interacts with CRIPT. Interacts with ERBB4 and PRPF8. Interacts with PIH1D1. Interacts with RPAP3 and URI1 in a ZNHIT2-dependent manner. Interacts with NRDE2. Interacts with FAM50A. Interacts with UBL5.

The protein localises to the nucleus. Its function is as follows. Required for pre-mRNA splicing as component of the spliceosome, including pre-catalytic, catalytic and post-catalytic spliceosomal complexes. Component of the U5 snRNP and the U4/U6-U5 tri-snRNP complex, a building block of the spliceosome. As a component of the minor spliceosome, involved in the splicing of U12-type introns in pre-mRNAs. In Mus musculus (Mouse), this protein is 116 kDa U5 small nuclear ribonucleoprotein component (Eftud2).